Reading from the N-terminus, the 328-residue chain is tRNA uridine(34) hydroxylase (328 aa).

One can recognise a Rhodanese domain in the interval Leu-130–Glu-224. The Cysteine persulfide intermediate role is filled by Cys-184.

The protein belongs to the TrhO family.

It catalyses the reaction uridine(34) in tRNA + AH2 + O2 = 5-hydroxyuridine(34) in tRNA + A + H2O. Functionally, catalyzes oxygen-dependent 5-hydroxyuridine (ho5U) modification at position 34 in tRNAs. This is tRNA uridine(34) hydroxylase from Streptococcus pyogenes serotype M12 (strain MGAS2096).